The following is a 515-amino-acid chain: GMP synthase [glutamine-hydrolyzing] (515 aa).

Residues 6–198 (KVIIIDYGSQ…LFHVAKLKAD (193 aa)) form the Glutamine amidotransferase type-1 domain. Cysteine 83 acts as the Nucleophile in catalysis. Catalysis depends on residues histidine 172 and glutamate 174. The GMPS ATP-PPase domain maps to 199 to 390 (WTMSSFVERA…LGLPDFIIWR (192 aa)). 226–232 (SGGIDST) serves as a coordination point for ATP.

As to quaternary structure, homodimer.

The catalysed reaction is XMP + L-glutamine + ATP + H2O = GMP + L-glutamate + AMP + diphosphate + 2 H(+). It participates in purine metabolism; GMP biosynthesis; GMP from XMP (L-Gln route): step 1/1. In terms of biological role, catalyzes the synthesis of GMP from XMP. This chain is GMP synthase [glutamine-hydrolyzing], found in Nitratidesulfovibrio vulgaris (strain DP4) (Desulfovibrio vulgaris).